Here is a 143-residue protein sequence, read N- to C-terminus: MFLGTHSPRLDDKGRLILPAKFRDELEGGVVMTRGQDRCIYVFTTREFEELHDRMRQAPLASKQARDYMRVFLSGANAETPDKQHRITIPQALRTYAGLDRELAVIGAGSRVEIWDAGTWDEYLTANESAFADTAEEVIPGLF.

SpoVT-AbrB domains lie at 5 to 47 (THSP…TTRE) and 76 to 119 (ANAE…DAGT).

It belongs to the MraZ family. Forms oligomers.

It localises to the cytoplasm. The protein resides in the nucleoid. This is Transcriptional regulator MraZ from Clavibacter michiganensis subsp. michiganensis (strain NCPPB 382).